The chain runs to 445 residues: Xylose isomerase (445 aa).

Catalysis depends on residues His107 and Asp110. Mg(2+)-binding residues include Glu238, Glu274, His277, Asp302, Asp313, Asp315, and Asp345.

It belongs to the xylose isomerase family. Homotetramer. The cofactor is Mg(2+).

It localises to the cytoplasm. The enzyme catalyses alpha-D-xylose = alpha-D-xylulofuranose. The protein is Xylose isomerase of Bacillus velezensis (strain DSM 23117 / BGSC 10A6 / LMG 26770 / FZB42) (Bacillus amyloliquefaciens subsp. plantarum).